The chain runs to 1396 residues: MYNPYQQQQQGMGYNPQQQTGYGYNNYQMPQQPQFNQQPMYPQATGFVPQQPNLYGSNFQTSGGSGMAPQQTGFSQQQTMQPQQTGYIQTQPTGFGGTAPIVTENSELKIPSIRLSFISAEDQKKFEHLFRTAVPKGEQSISGDSASGILLRSGLSAVTLAEIWNLSDIDKTGSLLFPEFALSLHLCSMAKRGEPLPGILPEKWLNEVRSFVDQINFTVPDDPSKILANTPFANFAPKKESDWLAPQSTGYLQNQSAPPMTSFQPQVTGFGGQGLVSQATGGVPMPSTTFGNAAGLTAQRTGGGTLIPLQPQQTAGLIPAQKTGPLNPQTTGFNQQSLQQQRTGGLPQQLTGYQGPPQGQGQQLQQQRTGGFPQVQSQPTGGFVPQTSFQQPQLVSQRTGPMQAQPTGSLQAQPTGRPGEWGFVSMPTGGIPGLNAMQQHFLPNNQLPTSNLHSAMDNKLKENVTWAITKQEKQIYDGLFQAWDNQKKGYVDSNVALNVFTKSGLSRSDLESIWTLVDTDDTGKLNKNQFAVAMHLIYRRLNGYDIPLRLPPELIPPADRTLKDTMDSLKNSLKGGVNNKPTKPPKPQSKPDGTRFKNDDNNFGYVSNVRHRRKSTSDESHKSSVKSSSDYDLSIEDMKKLIHEKRILLDALDTEDQANNYSRSSSSMHEKQIIENLKKEIMAVQTKLDERGNDGPSSDERNKLLATLDHLTRDVVPRLISDIHKVNQEISRKKAEVFKLELLKKNPSWNPEDDESQIQGTGPNGEVTDYDRIKYQSRQKLKQRMAALTGKSTGGNSDLDLELKQATEKAQDEASRQSEMIQDIAAGIKTMEDECAAKLSSSVTEDVGHEKWEQGKGISSEVAKFVKELEAFSKEQRRNIAKSQKQEQTREPLAKQQTNASLVSDSGAAKSAYATPEERAAYIKQQAEKRMNERLAKLGITRKSKSTEQKPPVESKSVSNHSPVPDSEVKSVTRNANEVEVQKPKPDSQPVSKNREPAEQPNSKADTNSVGSQNVVSNTNDDTSGDDDDEEYKAILKQKQEMEARERERKLRKQKAKEERLAKIKKEMEEMKKREMEESQDEEEEEAKQVTSVHVSRAQSSNANSNVIPQQETATENVNTVSQPTSTDTAKQSYHPHESNPFSKMNNNTSQNSTVTNTGTNPFFKSTSQETKIDPHKAEAQRASQRGVASSGGWSDSEEEESEEESPNRAGAAKLASLLFGGMPQPPTTSSSSLNNDAEKVSEQEHENAKQVASTPLSNDDNGKTDSGPSGFAGENESSFSQAPPIPVDAPPAPNSIPPPPPPPPQFSNEAPPVPDSIPPPPPPPSVPSTVPALPDSMPPPPPPPPPPAAPNNTSSSQQASGAPNIGALLGQITGGASLRKVETKVSSGATVGRVL.

The interval 1 to 20 is disordered; sequence MYNPYQQQQQGMGYNPQQQT. The EH 1 domain maps to 122 to 211; sequence DQKKFEHLFR…EKWLNEVRSF (90 aa). In terms of domain architecture, EF-hand 1 spans 155-190; sequence LSAVTLAEIWNLSDIDKTGSLLFPEFALSLHLCSMA. Polar residues-rich tracts occupy residues 249 to 267 and 324 to 342; these read TGYLQNQSAPPMTSFQPQV and GPLNPQTTGFNQQSLQQQR. Disordered stretches follow at residues 249–269 and 318–383; these read TGYLQNQSAPPMTSFQPQVTG and IPAQ…TGGF. Residues 343 to 371 are compositionally biased toward low complexity; that stretch reads TGGLPQQLTGYQGPPQGQGQQLQQQRTGG. Polar residues predominate over residues 374-383; it reads QVQSQPTGGF. Positions 472–561 constitute an EH 2 domain; the sequence is EKQIYDGLFQ…PELIPPADRT (90 aa). An EF-hand 2 domain is found at 505 to 540; it reads LSRSDLESIWTLVDTDDTGKLNKNQFAVAMHLIYRR. Disordered regions lie at residues 569–630, 746–771, 877–916, 933–1369, and 1377–1396; these read LKNS…SSSD, NPSWNPEDDESQIQGTGPNGEVTDYD, RRNIAKSQKQEQTREPLAKQQTNASLVSDSGAAKSAYATP, ERLA…IGAL, and ASLRKVETKVSSGATVGRVL. Residues 877 to 893 are compositionally biased toward basic and acidic residues; sequence RRNIAKSQKQEQTREPL. Polar residues-rich tracts occupy residues 895–904 and 1000–1016; these read KQQTNASLVS and QPNSKADTNSVGSQNVV. 2 stretches are compositionally biased toward basic and acidic residues: residues 1032–1049 and 1056–1077; these read YKAILKQKQEMEARERER and AKEERLAKIKKEMEEMKKREME. Positions 1037-1093 form a coiled coil; it reads KQKQEMEARERERKLRKQKAKEERLAKIKKEMEEMKKREMEESQDEEEEEAKQVTSV. A compositionally biased stretch (polar residues) spans 1089–1132; that stretch reads QVTSVHVSRAQSSNANSNVIPQQETATENVNTVSQPTSTDTAKQ. A compositionally biased stretch (low complexity) spans 1146-1161; the sequence is NNNTSQNSTVTNTGTN. Over residues 1171-1180 the composition is skewed to basic and acidic residues; it reads TKIDPHKAEA. Residues 1196–1205 show a composition bias toward acidic residues; that stretch reads DSEEEESEEE. Residues 1237-1249 are compositionally biased toward basic and acidic residues; it reads DAEKVSEQEHENA. Positions 1251–1268 are enriched in polar residues; sequence QVASTPLSNDDNGKTDSG. 2 stretches are compositionally biased toward pro residues: residues 1284–1327 and 1337–1350; these read PPIP…PPSV and SMPPPPPPPPPPAA. Over residues 1352-1362 the composition is skewed to polar residues; that stretch reads NNTSSSQQASG. One can recognise a WH2 domain in the interval 1365–1382; it reads NIGALLGQITGGASLRKV.

The protein belongs to the PAN1 family. In terms of assembly, component of the PAN1 actin cytoskeleton-regulatory complex.

It is found in the cell membrane. Its subcellular location is the endosome membrane. The protein resides in the cytoplasm. It localises to the cytoskeleton. The protein localises to the actin patch. In terms of biological role, component of the PAN1 actin cytoskeleton-regulatory complex required for the internalization of endosomes during actin-coupled endocytosis. The complex links the site of endocytosis to the cell membrane-associated actin cytoskeleton. Mediates uptake of external molecules and vacuolar degradation of plasma membrane proteins. Plays a role in the proper organization of the cell membrane-associated actin cytoskeleton and promotes its destabilization. This is Actin cytoskeleton-regulatory complex protein PAN1 (PAN1) from Candida albicans (strain SC5314 / ATCC MYA-2876) (Yeast).